A 940-amino-acid polypeptide reads, in one-letter code: Valine--tRNA ligase (940 aa).

The short motif at 47 to 57 (PNVTGILHMGH) is the 'HIGH' region element. The 'KMSKS' region signature appears at 564-568 (KLSKS). K567 is a binding site for ATP. Residues 872-938 (PIEQITKEKN…LQSILDKLAS (67 aa)) adopt a coiled-coil conformation.

It belongs to the class-I aminoacyl-tRNA synthetase family. ValS type 1 subfamily. Monomer.

It localises to the cytoplasm. The catalysed reaction is tRNA(Val) + L-valine + ATP = L-valyl-tRNA(Val) + AMP + diphosphate. In terms of biological role, catalyzes the attachment of valine to tRNA(Val). As ValRS can inadvertently accommodate and process structurally similar amino acids such as threonine, to avoid such errors, it has a 'posttransfer' editing activity that hydrolyzes mischarged Thr-tRNA(Val) in a tRNA-dependent manner. This is Valine--tRNA ligase from Chlamydia felis (strain Fe/C-56) (Chlamydophila felis).